An 80-amino-acid chain; its full sequence is DNA-directed RNA polymerase subunit Rpo5 (80 aa).

The protein belongs to the archaeal Rpo5/eukaryotic RPB5 RNA polymerase subunit family. Part of the RNA polymerase complex.

The protein resides in the cytoplasm. The catalysed reaction is RNA(n) + a ribonucleoside 5'-triphosphate = RNA(n+1) + diphosphate. DNA-dependent RNA polymerase (RNAP) catalyzes the transcription of DNA into RNA using the four ribonucleoside triphosphates as substrates. The sequence is that of DNA-directed RNA polymerase subunit Rpo5 from Thermofilum pendens (strain DSM 2475 / Hrk 5).